The chain runs to 194 residues: Peptidyl-tRNA hydrolase (194 aa).

Position 16 (Y16) interacts with tRNA. H21 (proton acceptor) is an active-site residue. Positions 67, 69, and 115 each coordinate tRNA.

It belongs to the PTH family. In terms of assembly, monomer.

It localises to the cytoplasm. The catalysed reaction is an N-acyl-L-alpha-aminoacyl-tRNA + H2O = an N-acyl-L-amino acid + a tRNA + H(+). Its function is as follows. Hydrolyzes ribosome-free peptidyl-tRNAs (with 1 or more amino acids incorporated), which drop off the ribosome during protein synthesis, or as a result of ribosome stalling. Catalyzes the release of premature peptidyl moieties from peptidyl-tRNA molecules trapped in stalled 50S ribosomal subunits, and thus maintains levels of free tRNAs and 50S ribosomes. The sequence is that of Peptidyl-tRNA hydrolase from Escherichia coli O81 (strain ED1a).